Reading from the N-terminus, the 312-residue chain is Ribosomal RNA small subunit methyltransferase H (312 aa).

Residues 34 to 36 (AGH), aspartate 54, phenylalanine 81, aspartate 102, and glutamine 109 contribute to the S-adenosyl-L-methionine site.

This sequence belongs to the methyltransferase superfamily. RsmH family.

The protein resides in the cytoplasm. The catalysed reaction is cytidine(1402) in 16S rRNA + S-adenosyl-L-methionine = N(4)-methylcytidine(1402) in 16S rRNA + S-adenosyl-L-homocysteine + H(+). Functionally, specifically methylates the N4 position of cytidine in position 1402 (C1402) of 16S rRNA. This is Ribosomal RNA small subunit methyltransferase H from Geobacter sp. (strain M21).